Reading from the N-terminus, the 264-residue chain is Putative hydro-lyase Psyr_0498 (264 aa).

This sequence belongs to the D-glutamate cyclase family.

In Pseudomonas syringae pv. syringae (strain B728a), this protein is Putative hydro-lyase Psyr_0498.